Here is a 1187-residue protein sequence, read N- to C-terminus: Myelin transcription factor 1-like protein (1187 aa).

The segment at M1–E22 is disordered. The CCHHC-type 1 zinc finger occupies E22–D65. Zn(2+) contacts are provided by C31, C36, H49, and C55. 2 disordered regions span residues P56 to C178 and R221 to S248. Acidic residues predominate over residues E89–E172. Residue S251 is modified to Phosphoserine. Disordered stretches follow at residues S343–E422 and R450–G514. Over residues E344–V358 the composition is skewed to polar residues. 4 stretches are compositionally biased toward basic and acidic residues: residues V362 to Y377, A401 to D412, R450 to V488, and D496 to K506. CCHHC-type zinc fingers lie at residues S498–I541 and L542–K585. Zn(2+)-binding residues include C507, C512, H525, C531, C551, C556, H569, and C575. The disordered stretch occupies residues A686–S710. 3 consecutive CCHHC-type zinc fingers follow at residues L897–I940, D946–G989, and K999–A1042. Zn(2+) contacts are provided by C906, C911, H924, C930, C955, C960, H973, C979, C1008, C1013, H1026, and C1032. Residues N1058–S1132 are a coiled coil.

This sequence belongs to the MYT1 family. Interacts with SIN3B. Brain.

The protein resides in the nucleus. It is found in the chromosome. Its function is as follows. Transcription factor that plays a key role in neuronal differentiation by specifically repressing expression of non-neuronal genes during neuron differentiation. In contrast to other transcription repressors that inhibit specific lineages, mediates repression of multiple differentiation programs. Also represses expression of negative regulators of neurogenesis, such as members of the Notch signaling pathway, including HES1. The combination of three transcription factors, ASCL1, POU3F2/BRN2 and MYT1L, is sufficient to reprogram fibroblasts and other somatic cells into induced neuronal (iN) cells in vitro. Directly binds the 5'-AAGTT-3' core motif present on the promoter of target genes and represses transcription by recruiting a multiprotein complex containing SIN3B. The 5'-AAGTT-3' core motif is absent from the promoter of neural genes. This is Myelin transcription factor 1-like protein from Mus musculus (Mouse).